The chain runs to 131 residues: Large ribosomal subunit protein bL19 (131 aa).

This sequence belongs to the bacterial ribosomal protein bL19 family.

In terms of biological role, this protein is located at the 30S-50S ribosomal subunit interface and may play a role in the structure and function of the aminoacyl-tRNA binding site. The sequence is that of Large ribosomal subunit protein bL19 from Rhodopseudomonas palustris (strain HaA2).